The chain runs to 289 residues: D-alanine aminotransferase (289 aa).

Substrate is bound at residue Tyr-31. Residue Arg-50 participates in pyridoxal 5'-phosphate binding. Substrate-binding residues include Arg-99 and His-101. Lys-147 is modified (N6-(pyridoxal phosphate)lysine). Position 179 (Glu-179) interacts with pyridoxal 5'-phosphate.

The protein belongs to the class-IV pyridoxal-phosphate-dependent aminotransferase family. In terms of assembly, homodimer. It depends on pyridoxal 5'-phosphate as a cofactor.

The catalysed reaction is D-alanine + 2-oxoglutarate = D-glutamate + pyruvate. Acts on the D-isomers of alanine, leucine, aspartate, glutamate, aminobutyrate, norvaline and asparagine. The enzyme transfers an amino group from a substrate D-amino acid to the pyridoxal phosphate cofactor to form pyridoxamine and an alpha-keto acid in the first half-reaction. The second half-reaction is the reverse of the first, transferring the amino group from the pyridoxamine to a second alpha-keto acid to form the product D-amino acid via a ping-pong mechanism. This is an important process in the formation of D-alanine and D-glutamate, which are essential bacterial cell wall components. In Listeria monocytogenes serotype 1/2a (strain 10403S), this protein is D-alanine aminotransferase (dat).